We begin with the raw amino-acid sequence, 56 residues long: Large ribosomal subunit protein bL33 (56 aa).

It belongs to the bacterial ribosomal protein bL33 family.

This chain is Large ribosomal subunit protein bL33, found in Orientia tsutsugamushi (strain Ikeda) (Rickettsia tsutsugamushi).